We begin with the raw amino-acid sequence, 212 residues long: MKNLERLFAEKLLKIKAIKLQPANPFTWASGWKSPFYCDNRKTLSYPSLRNFVKIEITRLILERFGQVDAIAGVATGAIPQGALVADALNLPFVYVRSTPKDHGLENLIEGELRPGMKVVVVEDLISTGGSSLKAVEAIRRDGCEVIGMVAAYTYGFPVAEEAFKNAKVPLVTLTNYEAVLDVALRTGYIEEEDIATLNDWRKDPAHWDAGK.

Residues arginine 97, lysine 101, histidine 103, and 123–131 (EDLISTGGS) each bind 5-phospho-alpha-D-ribose 1-diphosphate. Serine 127 contributes to the orotate binding site.

Belongs to the purine/pyrimidine phosphoribosyltransferase family. PyrE subfamily. As to quaternary structure, homodimer. Mg(2+) is required as a cofactor.

The enzyme catalyses orotidine 5'-phosphate + diphosphate = orotate + 5-phospho-alpha-D-ribose 1-diphosphate. It functions in the pathway pyrimidine metabolism; UMP biosynthesis via de novo pathway; UMP from orotate: step 1/2. In terms of biological role, catalyzes the transfer of a ribosyl phosphate group from 5-phosphoribose 1-diphosphate to orotate, leading to the formation of orotidine monophosphate (OMP). In Bacteroides thetaiotaomicron (strain ATCC 29148 / DSM 2079 / JCM 5827 / CCUG 10774 / NCTC 10582 / VPI-5482 / E50), this protein is Orotate phosphoribosyltransferase.